We begin with the raw amino-acid sequence, 420 residues long: 2-(3-amino-3-carboxypropyl)histidine synthase subunit 1 (420 aa).

[4Fe-4S] cluster contacts are provided by C127, C233, and C362.

It belongs to the DPH1/DPH2 family. DPH1 subfamily. In terms of assembly, component of the 2-(3-amino-3-carboxypropyl)histidine synthase complex composed of DPH1, DPH2, DPH3 and a NADH-dependent reductase, predominantly CBR1. [4Fe-4S] cluster serves as cofactor.

The protein resides in the cytoplasm. It carries out the reaction L-histidyl-[translation elongation factor 2] + S-adenosyl-L-methionine = 2-[(3S)-amino-3-carboxypropyl]-L-histidyl-[translation elongation factor 2] + S-methyl-5'-thioadenosine + H(+). The protein operates within protein modification; peptidyl-diphthamide biosynthesis. In terms of biological role, catalyzes the first step of diphthamide biosynthesis, a post-translational modification of histidine which occurs in elongation factor 2. DPH1 and DPH2 transfer a 3-amino-3-carboxypropyl (ACP) group from S-adenosyl-L-methionine (SAM) to a histidine residue, the reaction is assisted by a reduction system comprising DPH3 and a NADH-dependent reductase, predominantly CBR1. This is 2-(3-amino-3-carboxypropyl)histidine synthase subunit 1 (DPH1) from Debaryomyces hansenii (strain ATCC 36239 / CBS 767 / BCRC 21394 / JCM 1990 / NBRC 0083 / IGC 2968) (Yeast).